Here is a 95-residue protein sequence, read N- to C-terminus: Aspartyl/glutamyl-tRNA(Asn/Gln) amidotransferase subunit C (95 aa).

Belongs to the GatC family. As to quaternary structure, heterotrimer of A, B and C subunits.

The catalysed reaction is L-glutamyl-tRNA(Gln) + L-glutamine + ATP + H2O = L-glutaminyl-tRNA(Gln) + L-glutamate + ADP + phosphate + H(+). It carries out the reaction L-aspartyl-tRNA(Asn) + L-glutamine + ATP + H2O = L-asparaginyl-tRNA(Asn) + L-glutamate + ADP + phosphate + 2 H(+). Allows the formation of correctly charged Asn-tRNA(Asn) or Gln-tRNA(Gln) through the transamidation of misacylated Asp-tRNA(Asn) or Glu-tRNA(Gln) in organisms which lack either or both of asparaginyl-tRNA or glutaminyl-tRNA synthetases. The reaction takes place in the presence of glutamine and ATP through an activated phospho-Asp-tRNA(Asn) or phospho-Glu-tRNA(Gln). The protein is Aspartyl/glutamyl-tRNA(Asn/Gln) amidotransferase subunit C of Azoarcus sp. (strain BH72).